Reading from the N-terminus, the 709-residue chain is Polyribonucleotide nucleotidyltransferase (709 aa).

The Mg(2+) site is built by aspartate 486 and aspartate 492. Residues 553-612 (PRIHTIKINADKIKDVIGKGGSVIRALTEETGTTIEIEDDGTVKIAATSGEQAKQAIARI) form the KH domain. Residues 622–690 (GRIYNGKVTR…RQGRIRLSMK (69 aa)) enclose the S1 motif domain. Residues 690–709 (KEAQATQQEAAETSSEDPAN) are disordered. A compositionally biased stretch (low complexity) spans 691-702 (EAQATQQEAAET).

This sequence belongs to the polyribonucleotide nucleotidyltransferase family. As to quaternary structure, component of the RNA degradosome, which is a multiprotein complex involved in RNA processing and mRNA degradation. Mg(2+) serves as cofactor.

Its subcellular location is the cytoplasm. The enzyme catalyses RNA(n+1) + phosphate = RNA(n) + a ribonucleoside 5'-diphosphate. Functionally, involved in mRNA degradation. Catalyzes the phosphorolysis of single-stranded polyribonucleotides processively in the 3'- to 5'-direction. This is Polyribonucleotide nucleotidyltransferase from Proteus mirabilis (strain HI4320).